The primary structure comprises 455 residues: tRNA modification GTPase MnmE (455 aa).

The (6S)-5-formyl-5,6,7,8-tetrahydrofolate site is built by arginine 24, glutamate 86, and arginine 125. In terms of domain architecture, TrmE-type G spans 220–376 (GLTVAIIGRP…LETAILETVQ (157 aa)). Asparagine 230 contributes to the K(+) binding site. GTP-binding positions include 230–235 (NVGKSS), 249–255 (TDLPGTT), and 274–277 (DTAG). Serine 234 is a Mg(2+) binding site. The K(+) site is built by threonine 249, leucine 251, and threonine 254. Threonine 255 provides a ligand contact to Mg(2+). Lysine 455 contributes to the (6S)-5-formyl-5,6,7,8-tetrahydrofolate binding site.

It belongs to the TRAFAC class TrmE-Era-EngA-EngB-Septin-like GTPase superfamily. TrmE GTPase family. As to quaternary structure, homodimer. Heterotetramer of two MnmE and two MnmG subunits. It depends on K(+) as a cofactor.

It localises to the cytoplasm. Functionally, exhibits a very high intrinsic GTPase hydrolysis rate. Involved in the addition of a carboxymethylaminomethyl (cmnm) group at the wobble position (U34) of certain tRNAs, forming tRNA-cmnm(5)s(2)U34. In Acaryochloris marina (strain MBIC 11017), this protein is tRNA modification GTPase MnmE.